The sequence spans 243 residues: MNLLLLSNSTQHGRGYLEHALDTVTGFLPAGARLAFVPYALADHDTYTARVRGALADAGIDVRGVHEGGDPLARLDEADAVFVGGGNSFRLLSALYRTGLREALVKAVRGGLPYMGASAGTNMAAPSLRTTNDMPIVEPPSFETLGLVPFQINPHYLDPDPGSTHKGETREERLREFLEENDVPVLGLREGSWLRVEGDRAVLGGERDARLFRRGTAPRELAVGSDLSELLDVRGEFDTGTRS.

Active-site charge relay system residues include Ser-118, Asp-133, and His-155.

The protein belongs to the peptidase S51 family.

The protein resides in the cytoplasm. The enzyme catalyses Dipeptidase E catalyzes the hydrolysis of dipeptides Asp-|-Xaa. It does not act on peptides with N-terminal Glu, Asn or Gln, nor does it cleave isoaspartyl peptides.. Functionally, hydrolyzes dipeptides containing N-terminal aspartate residues. May play a role in allowing the cell to use peptide aspartate to spare carbon otherwise required for the synthesis of the aspartate family of amino acids. The chain is Peptidase E from Streptomyces coelicolor (strain ATCC BAA-471 / A3(2) / M145).